The chain runs to 494 residues: Neuronal acetylcholine receptor subunit alpha-6 (494 aa).

The first 31 residues, 1-31, serve as a signal peptide directing secretion; that stretch reads MHPKRRLCWCLPASGAWAFMLTSLIADTTAC. The Extracellular portion of the chain corresponds to 32-240; it reads ESEERLFHKL…TYSFYIRRLP (209 aa). N54 and N171 each carry an N-linked (GlcNAc...) asparagine glycan. Residues C158 and C172 are joined by a disulfide bond. The next 3 helical transmembrane spans lie at 241 to 265, 272 to 290, and 306 to 327; these read MFYT…FYLP, VTLC…LVIT, and YLLF…VLNI. The Cytoplasmic segment spans residues 328-468; that stretch reads HYRTPTTHTM…WKYVAMVIDR (141 aa). A disordered region spans residues 364 to 390; the sequence is KNISKKTKKGSAKTSGKSKHSKHKDNK. Over residues 366-390 the composition is skewed to basic residues; the sequence is ISKKTKKGSAKTSGKSKHSKHKDNK. A helical membrane pass occupies residues 469 to 489; sequence VFLWVFIILCVFGTAGLFIQP.

The protein belongs to the ligand-gated ion channel (TC 1.A.9) family. Acetylcholine receptor (TC 1.A.9.1) subfamily. Alpha-6/CHRNA6 sub-subfamily. Neuronal AChR is composed of two different types of subunits: alpha and non-alpha (beta). CHRNA6/alpha-6 subunit can be combined to CHRNB2/beta-2, CHRNA4/alpha-4 and CHRNB3/beta-3 to give rise to functional receptors. Heteropentamers containing CHRNB3 have an stoichiometry of (CHRNA6:CHRNB2)2:CHRNB3. Interacts with LYPD6.

Its subcellular location is the synaptic cell membrane. The catalysed reaction is K(+)(in) = K(+)(out). It carries out the reaction Na(+)(in) = Na(+)(out). It catalyses the reaction Ca(2+)(in) = Ca(2+)(out). With respect to regulation, activated by a myriad of ligands such as acetylcholine, cytisine and nicotine. CHRNA6 nAChR activity is inhibited by the antagonists alpha-conotoxin MII and PIA, a small disulfide-constrained peptides from cone snails. Component of neuronal acetylcholine receptors (nAChRs) that function as pentameric, ligand-gated cation channels with high calcium permeability among other activities. nAChRs are excitatory neurotrasnmitter receptors formed by a collection of nAChR subunits known to mediate synaptic transmission in the nervous system and the neuromuscular junction. Each nAchR subunit confers differential attributes to channel properties, including activation, deactivation and desensitization kinetics, pH sensitivity, cation permeability, and binding to allosteric modulators. CHRNA6 forms pentameric channels with CHRNB2 and CHRNA4 that exhibit high sensitivity to ACh and nicotine and are predominantly expressed in only a few brain areas, including dopaminergic neurons, norepirephrine neurons and cells of the visual system. nAChrs containing CHRNA6 subunits mediate endogenous cholinergic modulation of dopamine and gamma-aminobutyric acid (GABA) release in response to nicotine at nerve terminals. In terms of biological role, component of neuronal acetylcholine receptors (nAChRs) that function as pentameric, ligand-gated cation channels with high calcium permeability among other activities. nAChRs are excitatory neurotrasnmitter receptors formed by a collection of nAChR subunits known to mediate synaptic transmission in the nervous system and the neuromuscular junction. Each nAchR subunit confers differential attributes to channel properties, including activation, deactivation and desensitization kinetics, pH sensitivity, cation permeability, and binding to allosteric modulators. CHRNA6 forms pentameric channels with CHRNB2, CHRNB3 and CHRNA4 that exhibit high sensitivity to ACh and nicotine and are predominantly expressed in only a few brain areas, including dopaminergic neurons, norepirephrine neurons and cells of the visual system. nAChrs containing CHRNA6 subunits mediate endogenous cholinergic modulation of dopamine and gamma-aminobutyric acid (GABA) release in response to nicotine at nerve terminals. The sequence is that of Neuronal acetylcholine receptor subunit alpha-6 (CHRNA6) from Gallus gallus (Chicken).